Consider the following 78-residue polypeptide: MARVCQVTGKGPMTGNNVSHANNKTKRRFLPNLQSRRFWVESENRWVRLRVSAKAIRIIDKNGIDAVLADLRARGELA.

Residues 1–21 (MARVCQVTGKGPMTGNNVSHA) form a disordered region.

Belongs to the bacterial ribosomal protein bL28 family.

The chain is Large ribosomal subunit protein bL28 from Bordetella petrii (strain ATCC BAA-461 / DSM 12804 / CCUG 43448).